The primary structure comprises 349 residues: tRNA pseudouridine synthase D (349 aa).

Residue F27 coordinates substrate. The Nucleophile role is filled by D80. N129 contributes to the substrate binding site. Residues 155 to 303 (GVPNYFGAQR…VEASRRAMLL (149 aa)) form the TRUD domain. F329 lines the substrate pocket.

The protein belongs to the pseudouridine synthase TruD family.

It catalyses the reaction uridine(13) in tRNA = pseudouridine(13) in tRNA. Functionally, responsible for synthesis of pseudouridine from uracil-13 in transfer RNAs. The protein is tRNA pseudouridine synthase D of Salmonella typhi.